A 36-amino-acid chain; its full sequence is Photosystem I reaction center subunit VIII (36 aa).

A helical transmembrane segment spans residues 6 to 28; the sequence is FPSVLVPLVGLVFPAMAMASLSL.

Belongs to the PsaI family.

The protein localises to the plastid. Its subcellular location is the chloroplast thylakoid membrane. Its function is as follows. May help in the organization of the PsaL subunit. The polypeptide is Photosystem I reaction center subunit VIII (Panax ginseng (Korean ginseng)).